Here is a 121-residue protein sequence, read N- to C-terminus: Small ribosomal subunit protein uS13 (121 aa).

The disordered stretch occupies residues arginine 90 to lysine 121. Positions alanine 106–lysine 121 are enriched in basic residues.

It belongs to the universal ribosomal protein uS13 family. Part of the 30S ribosomal subunit. Forms a loose heterodimer with protein S19. Forms two bridges to the 50S subunit in the 70S ribosome.

Its function is as follows. Located at the top of the head of the 30S subunit, it contacts several helices of the 16S rRNA. In the 70S ribosome it contacts the 23S rRNA (bridge B1a) and protein L5 of the 50S subunit (bridge B1b), connecting the 2 subunits; these bridges are implicated in subunit movement. Contacts the tRNAs in the A and P-sites. This is Small ribosomal subunit protein uS13 from Enterococcus faecalis (strain ATCC 700802 / V583).